The chain runs to 388 residues: Zinc finger C2H2 protein ECU10_0150 (388 aa).

The segment at 299-322 adopts a C2H2-type zinc-finger fold; the sequence is YKCGFCGKAFESEKFIFNHFNNKH.

This is Zinc finger C2H2 protein ECU10_0150 from Encephalitozoon cuniculi (strain GB-M1) (Microsporidian parasite).